The sequence spans 180 residues: Sperm protein associated with the nucleus on the X chromosome N2 (180 aa).

2 disordered regions span residues Met1–Thr46 and Asn64–Asp180. Basic and acidic residues predominate over residues Gly10–Glu26. Residues Gln82–Ser169 are compositionally biased toward acidic residues. Over residues Ser170 to Asp180 the composition is skewed to low complexity.

The protein belongs to the SPAN-X family.

The chain is Sperm protein associated with the nucleus on the X chromosome N2 (SPANXN2) from Homo sapiens (Human).